The following is a 339-amino-acid chain: Putative methylthioribose-1-phosphate isomerase (339 aa).

Substrate contacts are provided by residues 43–45 (RGA), Arg86, and Gln191. The Proton donor role is filled by Asp232. Residue 241-242 (NK) participates in substrate binding.

Belongs to the eIF-2B alpha/beta/delta subunits family. MtnA subfamily.

It carries out the reaction 5-(methylsulfanyl)-alpha-D-ribose 1-phosphate = 5-(methylsulfanyl)-D-ribulose 1-phosphate. In terms of biological role, catalyzes the interconversion of methylthioribose-1-phosphate (MTR-1-P) into methylthioribulose-1-phosphate (MTRu-1-P). The polypeptide is Putative methylthioribose-1-phosphate isomerase (Archaeoglobus fulgidus (strain ATCC 49558 / DSM 4304 / JCM 9628 / NBRC 100126 / VC-16)).